The sequence spans 57 residues: Large ribosomal subunit protein uL30 (57 aa).

Belongs to the universal ribosomal protein uL30 family. Part of the 50S ribosomal subunit.

In Maridesulfovibrio salexigens (strain ATCC 14822 / DSM 2638 / NCIMB 8403 / VKM B-1763) (Desulfovibrio salexigens), this protein is Large ribosomal subunit protein uL30.